The chain runs to 475 residues: Chromosomal replication initiator protein DnaA (475 aa).

The segment at 1–73 (MSDIEQERWS…LACWQAELPD (73 aa)) is domain I, interacts with DnaA modulators. A domain II region spans residues 73–131 (DVHRIDLMVRSAMRCAAPAKEAPAADPRRPEHGDGRASTELKMVATAPASANHDALGGS). Residues 132 to 354 (PLDPRLTFAS…GAINRLLAHS (223 aa)) are domain III, AAA+ region. Positions 179, 181, 182, and 183 each coordinate ATP. A domain IV, binds dsDNA region spans residues 355 to 475 (KLNAQPVTLE…VELLKRQLQE (121 aa)).

It belongs to the DnaA family. As to quaternary structure, oligomerizes as a right-handed, spiral filament on DNA at oriC.

The protein localises to the cytoplasm. Its function is as follows. Plays an essential role in the initiation and regulation of chromosomal replication. ATP-DnaA binds to the origin of replication (oriC) to initiate formation of the DNA replication initiation complex once per cell cycle. Binds the DnaA box (a 9 base pair repeat at the origin) and separates the double-stranded (ds)DNA. Forms a right-handed helical filament on oriC DNA; dsDNA binds to the exterior of the filament while single-stranded (ss)DNA is stabiized in the filament's interior. The ATP-DnaA-oriC complex binds and stabilizes one strand of the AT-rich DNA unwinding element (DUE), permitting loading of DNA polymerase. After initiation quickly degrades to an ADP-DnaA complex that is not apt for DNA replication. Binds acidic phospholipids. This is Chromosomal replication initiator protein DnaA from Nitrobacter hamburgensis (strain DSM 10229 / NCIMB 13809 / X14).